Consider the following 1286-residue polypeptide: MDNDGGAPPPPPTLVVEEPKKAEIRGVAFKELFRFADGLDYVLMGIGSVGAFVHGCSLPLFLRFFADLVNSFGSNSNNVEKMMEEVLKYALYFLVVGAAIWASSWAEISCWMWSGERQTTKMRIKYLEAALNQDIQFFDTEVRTSDVVFAINTDAVMVQDAISEKLGNFIHYMATFVSGFIVGFTAVWQLALVTLAVVPLIAVIGGIHTTTLSKLSNKSQESLSQAGNIVEQTVVQIRVVMAFVGESRASQAYSSALKIAQKLGYKTGLAKGMGLGATYFVVFCCYALLLWYGGYLVRHHLTNGGLAIATMFAVMIGGLALGQSAPSMAAFAKAKVAAAKIFRIIDHKPTIERNSESGVELDSVTGLVELKNVDFSYPSRPDVKILNNFCLSVPAGKTIALVGSSGSGKSTVVSLIERFYDPNSGQVLLDGQDLKTLKLRWLRQQIGLVSQEPALFATSIKENILLGRPDADQVEIEEAARVANAHSFIIKLPDGFDTQVGERGLQLSGGQKQRIAIARAMLKNPAILLLDEATSALDSESEKLVQEALDRFMIGRTTLIIAHRLSTIRKADLVAVLQQGSVSEIGTHDELFSKGENGVYAKLIKMQEAAHETAMSNARKSSARPSSARNSVSSPIMTRNSSYGRSPYSRRLSDFSTSDFSLSIDASSYPNYRNEKLAFKDQANSFWRLAKMNSPEWKYALLGSVGSVICGSLSAFFAYVLSAVLSVYYNPDHEYMIKQIDKYCYLLIGLSSAALVFNTLQHSFWDIVGENLTKRVREKMLSAVLKNEMAWFDQEENESARIAARLALDANNVRSAIGDRISVIVQNTALMLVACTAGFVLQWRLALVLVAVFPVVVAATVLQKMFMTGFSGDLEAAHAKGTQLAGEAIANVRTVAAFNSEAKIVRLYTANLEPPLKRCFWKGQIAGSGYGVAQFCLYASYALGLWYASWLVKHGISDFSKTIRVFMVLMVSANGAAETLTLAPDFIKGGQAMRSVFELLDRKTEIEPDDPDTTPVPDRLRGEVELKHIDFSYPSRPDIQIFRDLSLRARAGKTLALVGPSGCGKSSVISLIQRFYEPSSGRVMIDGKDIRKYNLKAIRKHIAIVPQEPCLFGTTIYENIAYGHECATEAEIIQAATLASAHKFISALPEGYKTYVGERGVQLSGGQKQRIAIARALVRKAEIMLLDEATSALDAESERSVQEALDQACSGRTSIVVAHRLSTIRNAHVIAVIDDGKVAEQGSHSHLLKNHPDGIYARMIQLQRFTHTQVIGMTSGSSSRVKEDDA.

2 consecutive transmembrane segments (helical) span residues 42 to 62 (VLMG…PLFL) and 93 to 113 (FLVV…CWMW). Positions 44 to 333 (MGIGSVGAFV…SAPSMAAFAK (290 aa)) constitute an ABC transmembrane type-1 1 domain. Residue Asp139 participates in ATP binding. A run of 2 helical transmembrane segments spans residues 166–186 (LGNF…GFTA) and 187–207 (VWQL…IGGI). A glycan (N-linked (GlcNAc...) asparagine) is linked at Asn217. Transmembrane regions (helical) follow at residues 277-297 (ATYF…GYLV) and 301-321 (LTNG…GLAL). Tyr286 serves as a coordination point for brassinolide. The ABC transporter 1 domain maps to 368 to 604 (VELKNVDFSY…GENGVYAKLI (237 aa)). ATP-binding residues include Tyr377, Ser379, Arg380, Gly408, Lys409, Ser410, and Thr411. Positions 614–647 (AMSNARKSSARPSSARNSVSSPIMTRNSSYGRSP) are disordered. Low complexity predominate over residues 616-635 (SNARKSSARPSSARNSVSSP). The N-linked (GlcNAc...) asparagine glycan is linked to Asn640. Residues 700-988 (ALLGSVGSVI…TLTLAPDFIK (289 aa)) enclose the ABC transmembrane type-1 2 domain. Transmembrane regions (helical) follow at residues 705–725 (VGSV…SAVL) and 745–765 (YLLI…HSFW). Asn771 is a glycosylation site (N-linked (GlcNAc...) asparagine). ATP is bound at residue Asp793. An N-linked (GlcNAc...) asparagine glycan is attached at Asn797. 4 helical membrane-spanning segments follow: residues 821 to 843 (ISVI…VLQW), 845 to 867 (LALV…KMFM), 932 to 952 (VAQF…SWLV), and 967 to 987 (MVLM…PDFI). Residues Tyr941 and Glu978 each contribute to the brassinolide site. In terms of domain architecture, ABC transporter 2 spans 1024 to 1260 (VELKHIDFSY…HPDGIYARMI (237 aa)). ATP contacts are provided by Tyr1033, Arg1036, Gly1064, Lys1065, and Ser1066. The interaction with FKBP42/TWD1 stretch occupies residues 1049 to 1286 (ARAGKTLALV…SSSRVKEDDA (238 aa)).

The protein belongs to the ABC transporter superfamily. ABCB family. Multidrug resistance exporter (TC 3.A.1.201) subfamily. Interacts with 1-naphthylphthalamic acid (NPA) and FKBP42/TWD1. In terms of tissue distribution, ubiquitous, with high levels in peduncles. Mostly localized in young developing tissues, including meristems, as well as root and shoot apices.

The protein localises to the cell membrane. The catalysed reaction is (indol-3-yl)acetate(in) + ATP + H2O = (indol-3-yl)acetate(out) + ADP + phosphate + H(+). The enzyme catalyses brassinolide(in) + ATP + H2O = brassinolide(out) + ADP + phosphate + H(+). It carries out the reaction 24-epi-brassinolide(in) + ATP + H2O = 24-epi-brassinolide(out) + ADP + phosphate + H(+). It catalyses the reaction 24-epi-castasterone(in) + ATP + H2O = 24-epi-castasterone(out) + ADP + phosphate + H(+). The catalysed reaction is castasterone(in) + ATP + H2O = castasterone(out) + ADP + phosphate + H(+). Transport capacity is stimulated by the chaperone protein FKBP42/TWD1. Transport activity inhibited by 1-N-naphthylphthalamic acid (NPA), cyclopropyl propane dione (CPD), cyclosporin A, verapamil and quercetin. ATPase activity is specifically activated by bioactive brassinosteroids in a dose-dependent manner, including brassinolide (BL), 24-epiBL, 24-epicastasterone (24-epiCS) and castasterone-alkyne; BL binding leads to structural changes. Inhibited by vanadate. In terms of biological role, brassinosteroid exporter that, in conjunction with ABCB19, supports the accumulation of exogenous brassinosteroids (BR) in the apoplast, thus promoting BR signaling initiation involving the specific receptor BRI1 and required for plant growth and stress responses. Auxin efflux transporter that acts as a negative regulator of light signaling to promote hypocotyl elongation. May contribute to the regulation of leaf position and morphology during PHOT1-mediated blue light responses involving auxin distribution, especially in low light fluence. Together with ABCB19 and in a FKBP42/TWD1-dependent manner, supports seed development by promoting stamen elongation and, to a lesser extent, anther dehiscence and pollen maturation, probably as auxin transporters. Mediates the accumulation of chlorophyll and anthocyanin, as well as the expression of genes in response to light. Participates directly in auxin efflux and thus regulates the polar (presumably basipetal) auxin transport (from root tips to root elongating zone). Also transports some auxin metabolites such as oxindoleacetic acid and indoleacetaldehyde. Involved in diverse auxin-mediated responses including gravitropism, phototropism and lateral root formation. Confers resistance to herbicides such as dicamba, pendimethalin, oryzalin, and monosodium acid methanearsonate (MSMA), but not to herbicides such as glyphosate, atrazine, bentazon and fluazifop-p-butyl. Also mediates resistance to xenobiotics such as cycloheximide and the cytokinin N6-(2-isopentenyl)adenine (2IP). This chain is ABC transporter B family member 1, found in Arabidopsis thaliana (Mouse-ear cress).